The chain runs to 267 residues: Serine/arginine-rich splicing factor 1 (267 aa).

One can recognise an RRM 1 domain in the interval 16–91; that stretch reads CRIYVGNLPP…YRLRVEFPRS (76 aa). Disordered regions lie at residues 90–137 and 212–267; these read RSGR…PSRR and KVDG…RSRT. The segment covering 93–127 has biased composition (gly residues); it reads RGAGGRGGGGGGGGGGGGGGGGGGGGGGGGGGGAP. One can recognise an RRM 2 domain in the interval 140-214; it reads YRVVVSGLPP…ETAYIRVKVD (75 aa). Residues 224–267 show a composition bias toward basic residues; it reads SRSRSRSRSRSRSRSNSRSRSYSPRRSRGSPRYSPRHSRSRSRT.

The protein belongs to the splicing factor SR family.

The protein localises to the cytoplasm. The protein resides in the nucleus speckle. Functionally, may play a role in preventing exon skipping, ensuring the accuracy of splicing and regulating alternative splicing. This Xenopus tropicalis (Western clawed frog) protein is Serine/arginine-rich splicing factor 1 (srsf1).